A 278-amino-acid chain; its full sequence is Large ribosomal subunit protein uL2 (278 aa).

The disordered stretch occupies residues 211 to 278; sequence KRWLGKRPQS…LIIRRRKGSK (68 aa). Positions 258-270 are enriched in basic and acidic residues; it reads KTRDTKKASEKLI.

This sequence belongs to the universal ribosomal protein uL2 family. As to quaternary structure, part of the 50S ribosomal subunit. Forms a bridge to the 30S subunit in the 70S ribosome.

One of the primary rRNA binding proteins. Required for association of the 30S and 50S subunits to form the 70S ribosome, for tRNA binding and peptide bond formation. It has been suggested to have peptidyltransferase activity; this is somewhat controversial. Makes several contacts with the 16S rRNA in the 70S ribosome. The polypeptide is Large ribosomal subunit protein uL2 (Lactobacillus helveticus (strain DPC 4571)).